The primary structure comprises 445 residues: UPF0210 protein SPP_0289 (445 aa).

Belongs to the UPF0210 family. As to quaternary structure, homodimer.

This Streptococcus pneumoniae (strain P1031) protein is UPF0210 protein SPP_0289.